The chain runs to 395 residues: 1-deoxy-D-xylulose 5-phosphate reductoisomerase (395 aa).

Positions 15, 16, 17, 18, 41, 43, and 126 each coordinate NADPH. Residue K127 coordinates 1-deoxy-D-xylulose 5-phosphate. E128 is a binding site for NADPH. Mn(2+) is bound at residue D152. Residues S153, E154, S178, and H201 each contribute to the 1-deoxy-D-xylulose 5-phosphate site. E154 provides a ligand contact to Mn(2+). An NADPH-binding site is contributed by G207. Positions 214, 219, 220, and 223 each coordinate 1-deoxy-D-xylulose 5-phosphate. E223 contacts Mn(2+).

It belongs to the DXR family. The cofactor is Mg(2+). Mn(2+) is required as a cofactor.

The catalysed reaction is 2-C-methyl-D-erythritol 4-phosphate + NADP(+) = 1-deoxy-D-xylulose 5-phosphate + NADPH + H(+). The protein operates within isoprenoid biosynthesis; isopentenyl diphosphate biosynthesis via DXP pathway; isopentenyl diphosphate from 1-deoxy-D-xylulose 5-phosphate: step 1/6. In terms of biological role, catalyzes the NADPH-dependent rearrangement and reduction of 1-deoxy-D-xylulose-5-phosphate (DXP) to 2-C-methyl-D-erythritol 4-phosphate (MEP). In Ruegeria sp. (strain TM1040) (Silicibacter sp.), this protein is 1-deoxy-D-xylulose 5-phosphate reductoisomerase.